The chain runs to 459 residues: Biphenyl dioxygenase subunit alpha (459 aa).

The 99-residue stretch at 58–156 (WLLLGHESHV…KEGDCGFDKA (99 aa)) folds into the Rieske domain. [2Fe-2S] cluster-binding residues include C100, H102, C120, and H123. Residues H233 and H239 each coordinate Fe cation.

Belongs to the bacterial ring-hydroxylating dioxygenase alpha subunit family. As to quaternary structure, heterohexamer consisting of three BphA subunits and three BphE subunits. A ferredoxin (BphF) and a ferredoxin reductase (BphG) must be present to obtain activity. The cofactor is [2Fe-2S] cluster. Fe cation is required as a cofactor.

The catalysed reaction is biphenyl + NADH + O2 + H(+) = (2R,3S)-3-phenylcyclohexa-3,5-diene-1,2-diol + NAD(+). The protein operates within xenobiotic degradation; biphenyl degradation; 2-hydroxy-2,4-pentadienoate and benzoate from biphenyl: step 1/4. The protein is Biphenyl dioxygenase subunit alpha (bphA) of Paraburkholderia xenovorans (strain LB400).